The primary structure comprises 313 residues: Ubiquinone biosynthesis protein COQ4, mitochondrial (313 aa).

Residues histidine 197, aspartate 198, histidine 201, and glutamate 213 each coordinate Zn(2+). Residues 290 to 313 (QPPDLRELRRKQKKLPEPERENAN) form a disordered region. Residues 303-313 (KLPEPERENAN) show a composition bias toward basic and acidic residues.

The protein belongs to the COQ4 family. As to quaternary structure, component of a multi-subunit COQ enzyme complex, composed of at least COQ3, COQ4, COQ5, COQ6, COQ7 and COQ9. Requires Zn(2+) as cofactor.

It is found in the mitochondrion inner membrane. It catalyses the reaction a 4-hydroxy-3-methoxy-5-(all-trans-polyprenyl)benzoate + H(+) = a 2-methoxy-6-(all-trans-polyprenyl)phenol + CO2. It participates in cofactor biosynthesis; ubiquinone biosynthesis. In terms of biological role, lyase that catalyzes the C1-decarboxylation of 4-hydroxy-3-methoxy-5-(all-trans-polyprenyl)benzoic acid into 2-methoxy-6-(all-trans-polyprenyl)phenol during ubiquinone biosynthesis. The chain is Ubiquinone biosynthesis protein COQ4, mitochondrial from Meyerozyma guilliermondii (strain ATCC 6260 / CBS 566 / DSM 6381 / JCM 1539 / NBRC 10279 / NRRL Y-324) (Yeast).